A 250-amino-acid polypeptide reads, in one-letter code: Hydroxyacylglutathione hydrolase (250 aa).

7 residues coordinate Zn(2+): His-52, His-54, Asp-56, His-57, His-107, Asp-128, and His-166.

It belongs to the metallo-beta-lactamase superfamily. Glyoxalase II family. As to quaternary structure, monomer. Zn(2+) is required as a cofactor.

It catalyses the reaction an S-(2-hydroxyacyl)glutathione + H2O = a 2-hydroxy carboxylate + glutathione + H(+). The protein operates within secondary metabolite metabolism; methylglyoxal degradation; (R)-lactate from methylglyoxal: step 2/2. Functionally, thiolesterase that catalyzes the hydrolysis of S-D-lactoyl-glutathione to form glutathione and D-lactic acid. This chain is Hydroxyacylglutathione hydrolase, found in Neisseria gonorrhoeae (strain ATCC 700825 / FA 1090).